The following is a 287-amino-acid chain: Polyamine aminopropyltransferase (287 aa).

The region spanning 5–238 is the PABS domain; the sequence is ETWHETLHDH…GIMTFAWASQ (234 aa). Q33 serves as a coordination point for S-methyl-5'-thioadenosine. H64 and D88 together coordinate spermidine. S-methyl-5'-thioadenosine contacts are provided by residues E108 and 140 to 141; that span reads DG. D158 functions as the Proton acceptor in the catalytic mechanism. A spermidine-binding site is contributed by 158–161; it reads DCTD. Position 165 (P165) interacts with S-methyl-5'-thioadenosine.

This sequence belongs to the spermidine/spermine synthase family. As to quaternary structure, homodimer or homotetramer.

Its subcellular location is the cytoplasm. It carries out the reaction S-adenosyl 3-(methylsulfanyl)propylamine + putrescine = S-methyl-5'-thioadenosine + spermidine + H(+). The protein operates within amine and polyamine biosynthesis; spermidine biosynthesis; spermidine from putrescine: step 1/1. In terms of biological role, catalyzes the irreversible transfer of a propylamine group from the amino donor S-adenosylmethioninamine (decarboxy-AdoMet) to putrescine (1,4-diaminobutane) to yield spermidine. The protein is Polyamine aminopropyltransferase of Sodalis glossinidius (strain morsitans).